A 492-amino-acid chain; its full sequence is Glutamyl-tRNA(Gln) amidotransferase subunit A (492 aa).

Residues Lys84 and Ser159 each act as charge relay system in the active site. Ser183 serves as the catalytic Acyl-ester intermediate.

The protein belongs to the amidase family. GatA subfamily. As to quaternary structure, heterotrimer of A, B and C subunits.

It carries out the reaction L-glutamyl-tRNA(Gln) + L-glutamine + ATP + H2O = L-glutaminyl-tRNA(Gln) + L-glutamate + ADP + phosphate + H(+). In terms of biological role, allows the formation of correctly charged Gln-tRNA(Gln) through the transamidation of misacylated Glu-tRNA(Gln) in organisms which lack glutaminyl-tRNA synthetase. The reaction takes place in the presence of glutamine and ATP through an activated gamma-phospho-Glu-tRNA(Gln). The polypeptide is Glutamyl-tRNA(Gln) amidotransferase subunit A (Anaeromyxobacter sp. (strain K)).